The primary structure comprises 490 residues: MSSLQILQGTFRLSDTKTLQLPQLTLNAGDSWAFVGSNGSGKSALARALAGELPLLKGERQSQFSHITRLSFEQLQKLVSDEWQRNNTDMLGPGEDDTGRTTAEIIQDEVKDAPRCMQLAQQFGITALLDRRFKYLSTGETRKTLLCQALMSEPDLLILDEPFDGLDVASRQQLAERLASLHQSGITLVLVLNRFDEIPEFVQFAGVLADCTLAETGAKEELLQQALVAQLAHSEQLEGVQLPEPDEPSARHALPANEPRIVLNNGVVSYNDRPILNNLSWQVNPGEHWQIVGPNGAGKSTLLSLVTGDHPQGYSNDLTLFGRRRGSGETIWDIKKHIGYVSSSLHLDYRVSTTVRNVILSGYFDSIGIYQAVSDRQQKLVQQWLDILGIDKRTADAPFHSLSWGQQRLALIVRALVKHPTLLILDEPLQGLDPLNRQLIRRFVDVLISEGETQLLFVSHHAEDAPACITHRLEFVPDGGLYRYVLTKIY.

ABC transporter domains follow at residues 4 to 235 and 261 to 489; these read LQIL…AHSE and IVLN…LTKI. ATP-binding positions include 36–43 and 293–300; these read GSNGSGKS and GPNGAGKS.

This sequence belongs to the ABC transporter superfamily.

The protein localises to the cell inner membrane. Its function is as follows. Probably not involved in the transport of molybdenum into the cell. The polypeptide is ABC transporter ATP-binding protein ModF (modF) (Escherichia coli (strain K12)).